A 270-amino-acid polypeptide reads, in one-letter code: MTDNLPLRGKVALVTGAARGIGRAYALRLAKRGADVAVVDFDLHSYKDYQLEAASMRGDTVVDEIREIGMRALGFQADVTDATTLNEAVQQIVGEWGRLDIAICNAGGGVGSPEETRASIVEKDLVDVVVARNLTGTIHTCQAVAVPMKEQRSGKIVTVGSQAGHRIEDNGGYAHYGAAKAAVAKYTQYLARDLGPFGVTVNCVAPGYISTGRLAPILSAMGDAQLLDDVPLGRYGTPEDCAGVIEFLSSDLSDYVTGAIIPVDGGLTYS.

NAD(+) contacts are provided by Arg-19, Asp-40, Asp-78, Val-79, Asn-105, Tyr-176, Lys-180, Ile-209, and Thr-211. Tyr-176 acts as the Proton acceptor in catalysis.

It belongs to the short-chain dehydrogenases/reductases (SDR) family. As to quaternary structure, homodimer.

It localises to the cytoplasm. It carries out the reaction cyclohexanol + NAD(+) = cyclohexanone + NADH + H(+). Its activity is regulated as follows. Activity is enhanced by the addition of Ba(2+) and Mg(2+), but inhibited by the addition of Al(3+), Ca(2+), Co(2+), Cu(2+), Mn(2+) and Zn(2+). In terms of biological role, catalyzes the oxidation of cyclohexanol to cyclohexanone. Can also use a broad range of other alcohols, including trans-cyclohexane-1,2-diol, trans-cyclopentane-1,2-diol, cyclopentanol, hexane-1,2-diol, ethanol, 1-propanol, 1-butanol, 1-pentanol and 1-hexanol. The chain is Cyclohexanol dehydrogenase from Rhodococcus sp. (strain TK6).